A 207-amino-acid polypeptide reads, in one-letter code: Probable GTP-binding protein EngB (207 aa).

Residues G24–L199 form the EngB-type G domain. GTP contacts are provided by residues G32–S39, G59–Q63, D77–G80, T144–D147, and Y178–G180. Residues S39 and T61 each coordinate Mg(2+).

It belongs to the TRAFAC class TrmE-Era-EngA-EngB-Septin-like GTPase superfamily. EngB GTPase family. Mg(2+) serves as cofactor.

Functionally, necessary for normal cell division and for the maintenance of normal septation. The polypeptide is Probable GTP-binding protein EngB (Xanthomonas oryzae pv. oryzae (strain MAFF 311018)).